The chain runs to 158 residues: MATVAGDDGGGGGEFYLRYYVGHKGKFGHEFLEFEFRPDGKLRYANNSNYKKDTMIRKEVFVSPSVLREATRIIHESEIMKEDDSNWPEPDRVGRQELEIVMGNEHISFTTSKIGSLVDVQTSKDPEGLRIFYYLVQDLKCFVFSLINLHFKIKPIQS.

The protein belongs to the mago nashi family. As to quaternary structure, heterodimers with Y14A and Y14B. Interacts with EIF4A3/RH2 and RH34. Part of the mRNA splicing-dependent exon junction complex (EJC); the core complex contains MLN51/CASC3, EIF4A3, MAGO and Y14.

It is found in the nucleus. The protein localises to the cytoplasm. Its function is as follows. Core component of the splicing-dependent multiprotein exon junction complex (EJC) deposited at splice junctions on mRNAs. The EJC is a dynamic structure consisting of core proteins and several peripheral nuclear and cytoplasmic associated factors that join the complex only transiently either during EJC assembly or during subsequent mRNA metabolism. The EJC marks the position of the exon-exon junction in the mature mRNA for the gene expression machinery and the core components remain bound to spliced mRNAs throughout all stages of mRNA metabolism thereby influencing downstream processes including nuclear mRNA export, subcellular mRNA localization, translation efficiency and nonsense-mediated mRNA decay (NMD). The MAGO-Y14 heterodimer inhibits the ATPase activity of EIF4A3, thereby trapping the ATP-bound EJC core onto spliced mRNA in a stable conformation. The MAGO-Y14 heterodimer interacts with the EJC key regulator PYM leading to EJC disassembly in the cytoplasm. EJC core heterodimers play essential roles in plant growth and development, and pollen and seed development. The MAGO-Y14 heterodimer selectively binds to the UDT1 (UNDEVELOPED TAPETUM 1) pre-mRNA transcript and regulates the splicing of UDT1, a key regulator in stamen development. This chain is Protein mago nashi homolog 1, found in Oryza sativa subsp. japonica (Rice).